The primary structure comprises 404 residues: Tryptophan synthase beta chain (404 aa).

Residue K90 is modified to N6-(pyridoxal phosphate)lysine.

This sequence belongs to the TrpB family. As to quaternary structure, tetramer of two alpha and two beta chains. Requires pyridoxal 5'-phosphate as cofactor.

It carries out the reaction (1S,2R)-1-C-(indol-3-yl)glycerol 3-phosphate + L-serine = D-glyceraldehyde 3-phosphate + L-tryptophan + H2O. Its pathway is amino-acid biosynthesis; L-tryptophan biosynthesis; L-tryptophan from chorismate: step 5/5. Its function is as follows. The beta subunit is responsible for the synthesis of L-tryptophan from indole and L-serine. This chain is Tryptophan synthase beta chain, found in Geobacillus thermodenitrificans (strain NG80-2).